Consider the following 792-residue polypeptide: Genome polyprotein (792 aa).

An interaction with host EXOC1 region spans residues 1–15 (MNNQRKKTGNPSFNM). Residues 1–101 (MNNQRKKTGN…LNIMNRRRRS (101 aa)) are Cytoplasmic-facing. Residues 37 to 72 (LLSGQGPMKLVMAFVAFLRFLAIPPTAGILKRWGSF) form a hydrophobic; homodimerization of capsid protein C region. Positions 101–114 (SVTMILMLLPTALA) are cleaved as a propeptide — ER anchor for the capsid protein C, removed in mature form by serine protease NS3. A helical membrane pass occupies residues 102–119 (VTMILMLLPTALAFHLTT). Residues 120 to 242 (RGGEPTLIVS…QIQKVETWAL (123 aa)) lie on the Extracellular side of the membrane. Asn-183 carries an N-linked (GlcNAc...) asparagine; by host glycan. A helical membrane pass occupies residues 243-260 (RHPGFTVIGLFLAHAIGT). Position 261 (Ser-261) is a topological domain, cytoplasmic. The helical transmembrane segment at 262-280 (ITQKGIIFILLMLVTPSMA) threads the bilayer. The Extracellular portion of the chain corresponds to 281 to 725 (MRCVGIGNRD…IHQIFGTAYG (445 aa)). Intrachain disulfides connect Cys-283–Cys-310, Cys-340–Cys-401, Cys-354–Cys-385, and Cys-372–Cys-396. Residue Asn-347 is glycosylated (N-linked (GlcNAc...) asparagine; by host). A fusion peptide region spans residues 378–391 (DRGWGNGCGLFGKG). N-linked (GlcNAc...) asparagine; by host glycosylation is present at Asn-433. Disulfide bonds link Cys-465/Cys-565 and Cys-582/Cys-613. Residues 726-746 (VLFSGVSWTMKIGIGILLTWL) form a helical membrane-spanning segment. At 747-752 (GLNSRS) the chain is on the cytoplasmic side. Residues 753–775 (TSLSMTCIAVGMVTLYLGVMVQA) form a helical membrane-spanning segment. The Extracellular portion of the chain corresponds to 776–792 (DSGCVINWKGKELKCGS). Cysteines 779 and 790 form a disulfide.

Homodimer. Interacts (via N-terminus) with host EXOC1 (via C-terminus); this interaction results in EXOC1 degradation through the proteasome degradation pathway. As to quaternary structure, forms heterodimers with envelope protein E in the endoplasmic reticulum and Golgi. In terms of assembly, homodimer; in the endoplasmic reticulum and Golgi. Interacts with protein prM. Interacts with non-structural protein 1. Homodimer; Homohexamer when secreted. Interacts with envelope protein E. In terms of processing, specific enzymatic cleavages in vivo yield mature proteins. Cleavages in the lumen of endoplasmic reticulum are performed by host signal peptidase, wereas cleavages in the cytoplasmic side are performed by serine protease NS3. Signal cleavage at the 2K-4B site requires a prior NS3 protease-mediated cleavage at the 4A-2K site. N-glycosylated. Post-translationally, N-glycosylated. The excreted form is glycosylated and this is required for efficient secretion of the protein from infected cells.

The protein resides in the virion. Its subcellular location is the host nucleus. It is found in the host cytoplasm. The protein localises to the host perinuclear region. It localises to the secreted. The protein resides in the virion membrane. Its subcellular location is the host endoplasmic reticulum membrane. Plays a role in virus budding by binding to the cell membrane and gathering the viral RNA into a nucleocapsid that forms the core of a mature virus particle. During virus entry, may induce genome penetration into the host cytoplasm after hemifusion induced by the surface proteins. Can migrate to the cell nucleus where it modulates host functions. Overcomes the anti-viral effects of host EXOC1 by sequestering and degrading the latter through the proteasome degradation pathway. Its function is as follows. Inhibits RNA silencing by interfering with host Dicer. Functionally, prevents premature fusion activity of envelope proteins in trans-Golgi by binding to envelope protein E at pH6.0. After virion release in extracellular space, gets dissociated from E dimers. In terms of biological role, acts as a chaperone for envelope protein E during intracellular virion assembly by masking and inactivating envelope protein E fusion peptide. prM is the only viral peptide matured by host furin in the trans-Golgi network probably to avoid catastrophic activation of the viral fusion activity in acidic Golgi compartment prior to virion release. prM-E cleavage is inefficient, and many virions are only partially matured. These uncleaved prM would play a role in immune evasion. May play a role in virus budding. Exerts cytotoxic effects by activating a mitochondrial apoptotic pathway through M ectodomain. May display a viroporin activity. Its function is as follows. Binds to host cell surface receptor and mediates fusion between viral and cellular membranes. Envelope protein is synthesized in the endoplasmic reticulum in the form of heterodimer with protein prM. They play a role in virion budding in the ER, and the newly formed immature particle is covered with 60 spikes composed of heterodimer between precursor prM and envelope protein E. The virion is transported to the Golgi apparatus where the low pH causes dissociation of PrM-E heterodimers and formation of E homodimers. prM-E cleavage is inefficient, and many virions are only partially matured. These uncleaved prM would play a role in immune evasion. Functionally, involved in immune evasion, pathogenesis and viral replication. Once cleaved off the polyprotein, is targeted to three destinations: the viral replication cycle, the plasma membrane and the extracellular compartment. Essential for viral replication. Required for formation of the replication complex and recruitment of other non-structural proteins to the ER-derived membrane structures. Excreted as a hexameric lipoparticle that plays a role against host immune response. Antagonizing the complement function. Binds to the host macrophages and dendritic cells. Inhibits signal transduction originating from Toll-like receptor 3 (TLR3). In terms of biological role, disrupts the host endothelial glycocalyx layer of host pulmonary microvascular endothelial cells, inducing degradation of sialic acid and shedding of heparan sulfate proteoglycans. NS1 induces expression of sialidases, heparanase, and activates cathepsin L, which activates heparanase via enzymatic cleavage. These effects are probably linked to the endothelial hyperpermeability observed in severe dengue disease. This Aedes aegypti (Yellowfever mosquito) protein is Genome polyprotein.